The sequence spans 69 residues: Conopeptide Y-Fe1 (69 aa).

The N-terminal stretch at 1–20 is a signal peptide; that stretch reads MSKLGVVLFVFLLLLPLAAP. Positions 21–69 are excised as a propeptide; sequence QPVGDQPADQPADRNAEARGTYLYPFSYYRLWRYFTRFLHKQPYYYVHI.

The protein belongs to the conotoxin M superfamily. Conopeptide Y family. Expressed by the venom duct.

The protein localises to the secreted. In terms of biological role, tyrosine-rich conopeptide that specifically targets voltage-gated potassium channel Kv1.6/KCNA6 (IC(50) is 8.8 uM) that is expressed in Xenopus oocytes. In vivo, causes seizures (at 5 nmol) and death (20 nmol) when intracranially injected into mice, and causes paralysis (at 10 pmol) to C.elegans. The protein is Conopeptide Y-Fe1 of Conus ferrugineus (Cone snail).